Consider the following 274-residue polypeptide: Cytochrome b-c1 complex subunit Rieske, mitochondrial (274 aa).

Topologically, residues 79-103 are mitochondrial matrix; sequence SHTDIKVPDFSDYRRSEVLDTTKSS. The helical transmembrane segment at 104-140 threads the bilayer; it reads RESSDARKGFSYLVTATTAVGVTYAAKSIVTQFVSSM. The Mitochondrial intermembrane portion of the chain corresponds to 141–274; that stretch reads SASADVLAMS…FTSDDLVIVG (134 aa). Residues 187 to 272 form the Rieske domain; it reads EAAVELSQLR…YEFTSDDLVI (86 aa). Residues Cys-217, His-219, Cys-236, His-239, and Ser-241 each coordinate [2Fe-2S] cluster. Cys-222 and Cys-238 form a disulfide bridge.

This sequence belongs to the Rieske iron-sulfur protein family. In terms of assembly, component of the ubiquinol-cytochrome c oxidoreductase (cytochrome b-c1 complex, complex III, CIII), a multisubunit enzyme composed of 11 subunits. The complex is composed of 3 respiratory subunits cytochrome b, cytochrome c1 and Rieske protein UQCRFS1, 2 core protein subunits UQCRC1/QCR1 and UQCRC2/QCR2, and 6 low-molecular weight protein subunits UQCRH/QCR6, UQCRB/QCR7, UQCRQ/QCR8, UQCR10/QCR9, UQCR11/QCR10 and subunit 9, the cleavage product of Rieske protein UQCRFS1. The complex exists as an obligatory dimer and forms supercomplexes (SCs) in the inner mitochondrial membrane with NADH-ubiquinone oxidoreductase (complex I, CI) and cytochrome c oxidase (complex IV, CIV), resulting in different assemblies (supercomplex SCI(1)III(2)IV(1) and megacomplex MCI(2)III(2)IV(2)). Incorporation of the Rieske protein UQCRFS1 is the penultimate step in complex III assembly. Interacts with TTC19, which is involved in the clearance of UQCRFS1 fragments. Component of the ubiquinol-cytochrome c oxidoreductase (cytochrome b-c1 complex, complex III, CIII). Subunit 9 corresponds to the mitochondrial targeting sequence (MTS) of Rieske protein UQCRFS1. It is retained after processing and incorporated inside complex III, where it remains bound to the complex and localizes between the 2 core subunits UQCRC1/QCR1 and UQCRC2/QCR2. [2Fe-2S] cluster serves as cofactor. Proteolytic processing is necessary for the correct insertion of UQCRFS1 in the complex III dimer. Several fragments are generated during UQCRFS1 insertion, most probably due to the endogenous matrix-processing peptidase (MPP) activity of the 2 core protein subunits UQCRC1/QCR1 and UQCRC2/QCR2, which are homologous to the 2 mitochondrial-processing peptidase (MPP) subunits beta-MPP and alpha-MPP respectively. The action of the protease is also necessary for the clearance of the UQCRFS1 fragments.

It localises to the mitochondrion inner membrane. It catalyses the reaction a quinol + 2 Fe(III)-[cytochrome c](out) = a quinone + 2 Fe(II)-[cytochrome c](out) + 2 H(+)(out). Component of the ubiquinol-cytochrome c oxidoreductase, a multisubunit transmembrane complex that is part of the mitochondrial electron transport chain which drives oxidative phosphorylation. The respiratory chain contains 3 multisubunit complexes succinate dehydrogenase (complex II, CII), ubiquinol-cytochrome c oxidoreductase (cytochrome b-c1 complex, complex III, CIII) and cytochrome c oxidase (complex IV, CIV), that cooperate to transfer electrons derived from NADH and succinate to molecular oxygen, creating an electrochemical gradient over the inner membrane that drives transmembrane transport and the ATP synthase. The cytochrome b-c1 complex catalyzes electron transfer from ubiquinol to cytochrome c, linking this redox reaction to translocation of protons across the mitochondrial inner membrane, with protons being carried across the membrane as hydrogens on the quinol. In the process called Q cycle, 2 protons are consumed from the matrix, 4 protons are released into the intermembrane space and 2 electrons are passed to cytochrome c. The Rieske protein is a catalytic core subunit containing a [2Fe-2S] iron-sulfur cluster. It cycles between 2 conformational states during catalysis to transfer electrons from the quinol bound in the Q(0) site in cytochrome b to cytochrome c1. Incorporation of UQCRFS1 is the penultimate step in complex III assembly. Its function is as follows. Component of the ubiquinol-cytochrome c oxidoreductase (cytochrome b-c1 complex, complex III, CIII). UQCRFS1 undergoes proteolytic processing once it is incorporated in the complex III dimer. One of the fragments, called subunit 9, corresponds to its mitochondrial targeting sequence (MTS). The proteolytic processing is necessary for the correct insertion of UQCRFS1 in the complex III dimer, but the persistence of UQCRFS1-derived fragments may prevent newly imported UQCRFS1 to be processed and assembled into complex III and is detrimental for the complex III structure and function. This chain is Cytochrome b-c1 complex subunit Rieske, mitochondrial (UQCRFS1), found in Aotus azarae (Azara's night monkey).